The following is a 258-amino-acid chain: Imidazole glycerol phosphate synthase subunit HisF (258 aa).

Active-site residues include aspartate 11 and aspartate 130.

It belongs to the HisA/HisF family. In terms of assembly, heterodimer of HisH and HisF.

The protein resides in the cytoplasm. It carries out the reaction 5-[(5-phospho-1-deoxy-D-ribulos-1-ylimino)methylamino]-1-(5-phospho-beta-D-ribosyl)imidazole-4-carboxamide + L-glutamine = D-erythro-1-(imidazol-4-yl)glycerol 3-phosphate + 5-amino-1-(5-phospho-beta-D-ribosyl)imidazole-4-carboxamide + L-glutamate + H(+). Its pathway is amino-acid biosynthesis; L-histidine biosynthesis; L-histidine from 5-phospho-alpha-D-ribose 1-diphosphate: step 5/9. Its function is as follows. IGPS catalyzes the conversion of PRFAR and glutamine to IGP, AICAR and glutamate. The HisF subunit catalyzes the cyclization activity that produces IGP and AICAR from PRFAR using the ammonia provided by the HisH subunit. The polypeptide is Imidazole glycerol phosphate synthase subunit HisF (Prochlorococcus marinus (strain MIT 9211)).